Consider the following 1663-residue polypeptide: TPR repeat-containing protein DDB_G0287407 (1663 aa).

Disordered regions lie at residues 84 to 109 (RKTQPTSSNGSTSTTTTTTTTTQKGQ) and 326 to 359 (SEYSSTNDDGENDQSDDDDDNEDDDDFVEKNSNQ). Over residues 89-105 (TSSNGSTSTTTTTTTTT) the composition is skewed to low complexity. Over residues 333-352 (DDGENDQSDDDDDNEDDDDF) the composition is skewed to acidic residues. TPR repeat units lie at residues 1110–1143 (SDVWFRVASFLEELSQFDGAEVLYNKCRELYINN), 1150–1183 (AKVDRAMGRMYLTMGQNDKSDSKFRLALSIYTKE), 1192–1225 (AITLNLLGTLATNRCKFDEAKQILNQAMNICESK), 1234–1269 (ADIAYSLGSVCFVEPNRKLEVAEAYFARSLELTESK), 1278–1311 (ARILTRLGSLNIEKDTYADAEAFFKAALKIYEAR), and 1320–1353 (SQILRHMISLYEVQENYKMAEQCCIRALAITKKI). Disordered regions lie at residues 1500 to 1528 (VAQPTSFNSPVQPPSPRTQQAIQQGQQQR) and 1544 to 1571 (QKVSSLQQQPQQQQQQQPSQGYGNRQNT). Positions 1516-1547 (RTQQAIQQGQQQRQQVQQQQQQVQQQMSQKVS) form a coiled coil. Low complexity-rich tracts occupy residues 1518 to 1528 (QQAIQQGQQQR) and 1544 to 1563 (QKVSSLQQQPQQQQQQQPSQ).

The sequence is that of TPR repeat-containing protein DDB_G0287407 from Dictyostelium discoideum (Social amoeba).